We begin with the raw amino-acid sequence, 238 residues long: Protein E6 (238 aa).

Residues 40-51 (KETTTREQKHET) are compositionally biased toward basic and acidic residues. Disordered regions lie at residues 40 to 64 (KETT…EEQE) and 210 to 238 (EFNE…EFEP). Residues 227-238 (EEFEESEEEFEP) are compositionally biased toward acidic residues.

In terms of tissue distribution, it is predominantly expressed in fiber cells.

The protein localises to the secreted. The protein resides in the cell wall. This chain is Protein E6 (E6), found in Gossypium hirsutum (Upland cotton).